The chain runs to 80 residues: Exodeoxyribonuclease 7 small subunit (80 aa).

It belongs to the XseB family. Heterooligomer composed of large and small subunits.

Its subcellular location is the cytoplasm. It catalyses the reaction Exonucleolytic cleavage in either 5'- to 3'- or 3'- to 5'-direction to yield nucleoside 5'-phosphates.. In terms of biological role, bidirectionally degrades single-stranded DNA into large acid-insoluble oligonucleotides, which are then degraded further into small acid-soluble oligonucleotides. In Escherichia coli O139:H28 (strain E24377A / ETEC), this protein is Exodeoxyribonuclease 7 small subunit.